The primary structure comprises 317 residues: tRNA dimethylallyltransferase (317 aa).

21 to 28 (GPTASGKS) is a binding site for ATP. 23 to 28 (TASGKS) is a binding site for substrate. Positions 46-49 (DSMQ) are interaction with substrate tRNA.

This sequence belongs to the IPP transferase family. In terms of assembly, monomer. The cofactor is Mg(2+).

It carries out the reaction adenosine(37) in tRNA + dimethylallyl diphosphate = N(6)-dimethylallyladenosine(37) in tRNA + diphosphate. In terms of biological role, catalyzes the transfer of a dimethylallyl group onto the adenine at position 37 in tRNAs that read codons beginning with uridine, leading to the formation of N6-(dimethylallyl)adenosine (i(6)A). The protein is tRNA dimethylallyltransferase of Nitrobacter hamburgensis (strain DSM 10229 / NCIMB 13809 / X14).